A 575-amino-acid polypeptide reads, in one-letter code: 4-substituted benzoates-glutamate ligase GH3.12 (575 aa).

Residues 6–33 (DINETFEKQLKDLTSNVKSIQDNLLEEI) adopt a coiled-coil conformation. Residue 95 to 96 (SS) coordinates AMP. Position 120 to 123 (120 to 123 (YDLR)) interacts with salicylate. The AMP site is built by threonine 301, threonine 324, serine 328, tyrosine 347, aspartate 398, and arginine 417.

It belongs to the IAA-amido conjugating enzyme family. As to quaternary structure, interacts with the P.syringae pv. maculicola effector HopW1-1 (via C-terminus). Expressed in seedlings, mostly in cotyledons, leaves, hypocotyls and sporadically in roots. Not detected in unchallenged adult plants, except in flowers.

Specifically and reversibly inhibited by salicylic acid (SA). Functionally, catalyzes the conjugation of specific amino acids (e.g. Glu and possibly His, Lys, and Met) to their preferred acyl substrates (e.g. 4-substituted benzoates), in a magnesium ion- and ATP-dependent manner. Can use 4-substituted benzoates such as 4-aminobenzoate (pABA), 4-fluorobenzoate and 4-hydroxybenzoate (4-HBA), and, to a lesser extent, benzoate, vanillate and trans-cinnamate, but not 2-substituted benzoates and salicylic acid (SA), as conjugating acyl substrates. Involved in both basal and induced resistance in a SA-dependent manner. Confers resistance to virulent and avirulent pathogens (at least bacteria and oomycetes), and promotes SA glucosides accumulation. Required for the establishment of hyper-sensitive response (HR) upon incompatible interaction and subsequent systemic acquired resistance (SAR). The chain is 4-substituted benzoates-glutamate ligase GH3.12 (GH3.12) from Arabidopsis thaliana (Mouse-ear cress).